A 554-amino-acid chain; its full sequence is 4-coumarate--CoA ligase 3 (554 aa).

ATP is bound by residues serine 188, serine 189, glycine 190, threonine 191, threonine 192, and lysine 196. The (E)-4-coumaroyl-AMP site is built by tyrosine 238 and serine 242. Lysine 259 contacts CoA. An SBD1 region spans residues 261–330; it reads DLGALVDLVR…AKIPNAVLGQ (70 aa). (E)-4-coumaroyl-AMP is bound by residues alanine 308, glutamine 330, glycine 331, threonine 335, and methionine 343. 3 residues coordinate ATP: glutamine 330, glycine 331, and threonine 335. The tract at residues 331–398 is SBD2; the sequence is GYGMTEAGPV…IRGEQIMKGY (68 aa). ATP contacts are provided by aspartate 419 and arginine 434. (E)-4-coumaroyl-AMP is bound by residues lysine 436 and lysine 440. Residues lysine 442 and glycine 443 each contribute to the CoA site. Position 525 (lysine 525) interacts with ATP.

This sequence belongs to the ATP-dependent AMP-binding enzyme family. Mg(2+) serves as cofactor. As to expression, expressed in root exodermis and epidermis cells, stem vascular cells, leaf developing vascular bundle cells and parenchyma cells, lemma, palea, stamens and pistil.

It carries out the reaction (E)-ferulate + ATP + CoA = (E)-feruloyl-CoA + AMP + diphosphate. The enzyme catalyses (E)-4-coumarate + ATP + CoA = (E)-4-coumaroyl-CoA + AMP + diphosphate. The catalysed reaction is (E)-caffeate + ATP + CoA = (E)-caffeoyl-CoA + AMP + diphosphate. It catalyses the reaction (E)-cinnamate + ATP + CoA = (E)-cinnamoyl-CoA + AMP + diphosphate. It carries out the reaction (E)-ferulate + ATP + H(+) = (E)-feruloyl-AMP + diphosphate. The enzyme catalyses (E)-feruloyl-AMP + CoA = (E)-feruloyl-CoA + AMP + H(+). The catalysed reaction is (E)-4-coumarate + ATP + H(+) = (E)-4-coumaroyl-AMP + diphosphate. It catalyses the reaction (E)-4-coumaroyl-AMP + CoA = (E)-4-coumaroyl-CoA + AMP + H(+). It carries out the reaction (E)-caffeate + ATP + H(+) = (E)-caffeoyl-AMP + diphosphate. The enzyme catalyses (E)-caffeoyl-AMP + CoA = (E)-caffeoyl-CoA + AMP + H(+). It participates in phytoalexin biosynthesis; 3,4',5-trihydroxystilbene biosynthesis; 3,4',5-trihydroxystilbene from trans-4-coumarate: step 1/2. Functionally, involved in the phenylpropanoid metabolism by mediating the activation of a number of hydroxycinnamates for the biosynthesis of monolignols and other phenolic secondary metabolites. Catalyzes the formation of CoA esters of cinnamate, 4-coumarate, caffeate and ferulate. Is more efficient with substrates in the following order: ferulate &gt; 4-coumarate &gt; caffeate &gt; cinnamate. Possesses very high activity compared to 4CL1, 4CL2, 4CL4 and 4CL5. Cannot convert sinapate to its corresponding CoA ester. May play a role in the synthesis of lignin as well as other phenolic compounds. Follows a two-step reaction mechanism, wherein the carboxylate substrate first undergoes adenylation by ATP, followed by a thioesterification in the presence of CoA to yield the final CoA thioester. The sequence is that of 4-coumarate--CoA ligase 3 from Oryza sativa subsp. japonica (Rice).